An 852-amino-acid chain; its full sequence is Lon protease homolog 2, peroxisomal (852 aa).

The residue at position 2 (S2) is an N-acetylserine. Residues 13 to 222 enclose the Lon N-terminal domain; sequence LPLLLTHEGV…MTIPLLVRQI (210 aa). 375–382 contributes to the ATP binding site; the sequence is GPPGVGKT. In terms of domain architecture, Lon proteolytic spans 651–837; that stretch reads LSQPGVAIGL…DEVLNAAFDG (187 aa). Residues S743 and K786 contribute to the active site. Residues 850–852 carry the Microbody targeting signal motif; that stretch reads SKL.

It belongs to the peptidase S16 family. Interacts with PEX5. Interacts with TYSND1. May interact with enzymes involved in beta-oxidation of fatty acids, including ACOX1/AOX.

The protein resides in the peroxisome matrix. It carries out the reaction Hydrolysis of proteins in presence of ATP.. Functionally, ATP-dependent serine protease that mediates the selective degradation of misfolded and unassembled polypeptides in the peroxisomal matrix. Necessary for type 2 peroxisome targeting signal (PTS2)-containing protein processing and facilitates peroxisome matrix protein import. May indirectly regulate peroxisomal fatty acid beta-oxidation through degradation of the self-processed forms of TYSND1. This is Lon protease homolog 2, peroxisomal from Pongo abelii (Sumatran orangutan).